An 872-amino-acid polypeptide reads, in one-letter code: Valine--tRNA ligase (872 aa).

Positions 46 to 56 (PNVTGKLHIGH) match the 'HIGH' region motif. The short motif at 523–527 (KMSKS) is the 'KMSKS' region element. Residue K526 participates in ATP binding. The stretch at 796–872 (IEIANDSFIN…KDKLKELTND (77 aa)) forms a coiled coil.

This sequence belongs to the class-I aminoacyl-tRNA synthetase family. ValS type 1 subfamily. In terms of assembly, monomer.

The protein localises to the cytoplasm. It carries out the reaction tRNA(Val) + L-valine + ATP = L-valyl-tRNA(Val) + AMP + diphosphate. In terms of biological role, catalyzes the attachment of valine to tRNA(Val). As ValRS can inadvertently accommodate and process structurally similar amino acids such as threonine, to avoid such errors, it has a 'posttransfer' editing activity that hydrolyzes mischarged Thr-tRNA(Val) in a tRNA-dependent manner. This chain is Valine--tRNA ligase, found in Mycoplasma mycoides subsp. mycoides SC (strain CCUG 32753 / NCTC 10114 / PG1).